Consider the following 263-residue polypeptide: MGELYLVGGGLSDVRDLTLRALEVLASVELVLVDTYTSVYDVSEGDLKRLLNGFGGDPEVRMCSRRDLEERFFDLCEGYDRVALLSPGDPMAATTHVALVVEAADRGWDVEIINGVSVFTAAPSKSGLEMYRFGRTATIPLNVRSVYPYDVLESNRQAGLHTLFLLEVAEDGEFVSVADAARYLLEIEREEGRGVLDPSDLAIAVVRLGFEDELVAWGTLEELSDWEPGEPPQALILPASRLREAEREYIRRVLPHIRDVRGV.

S-adenosyl-L-methionine-binding positions include Leu11, Asp89, Ala92, Ser117–Val118, Leu166, and Leu208.

This sequence belongs to the diphthine synthase family. As to quaternary structure, homodimer.

The enzyme catalyses 2-[(3S)-amino-3-carboxypropyl]-L-histidyl-[translation elongation factor 2] + 3 S-adenosyl-L-methionine = diphthine-[translation elongation factor 2] + 3 S-adenosyl-L-homocysteine + 3 H(+). The protein operates within protein modification; peptidyl-diphthamide biosynthesis. Its function is as follows. S-adenosyl-L-methionine-dependent methyltransferase that catalyzes the trimethylation of the amino group of the modified target histidine residue in translation elongation factor 2 (EF-2), to form an intermediate called diphthine. The three successive methylation reactions represent the second step of diphthamide biosynthesis. This Methanopyrus kandleri (strain AV19 / DSM 6324 / JCM 9639 / NBRC 100938) protein is Diphthine synthase.